A 950-amino-acid chain; its full sequence is Protocadherin alpha-13 (950 aa).

Positions 1 to 29 are cleaved as a signal peptide; sequence MLSSWQGGPRPRQLLLWLLILAAWETGSG. Topologically, residues 30 to 697 are extracellular; sequence QLHYSVPEEA…GPEAALVDVN (668 aa). 6 Cadherin domains span residues 34–133, 134–242, 243–350, 351–455, 456–565, and 581–678; these read SVPE…PPIF, PESK…APEF, YQSV…APEV, TITS…APAF, AQPE…APAL, and MPRS…APQA. 2 N-linked (GlcNAc...) asparagine glycosylation sites follow: Asn257 and Asn265. N-linked (GlcNAc...) asparagine glycosylation occurs at Asn548. A helical membrane pass occupies residues 698–718; the sequence is VYLIIAICAVSSLLVLTLLLY. The Cytoplasmic segment spans residues 719 to 950; it reads TALRCSAPPT…GNSTTDNSDQ (232 aa). 6 PXXP repeats span residues 734–737, 774–777, 799–802, 832–835, 873–876, and 891–894; these read PGKP, PSLP, PRQP, PGGP, PGNP, and PGSP. The interval 734-894 is 6 X 4 AA repeats of P-X-X-P; it reads PGKPTLVCSS…PDKFIIPGSP (161 aa). 2 disordered regions span residues 774 to 808 and 827 to 950; these read PSLP…DWRY and ILRA…NSDQ. A compositionally biased stretch (basic and acidic residues) spans 787–800; it reads GQREEDSEGLKEPR. Basic and acidic residues predominate over residues 909–923; it reads DKSDFITFGKKEETK.

The protein localises to the cell membrane. In terms of biological role, potential calcium-dependent cell-adhesion protein. May be involved in the establishment and maintenance of specific neuronal connections in the brain. This Pan troglodytes (Chimpanzee) protein is Protocadherin alpha-13 (PCDHA13).